The primary structure comprises 55 residues: ATP synthase F(0) complex subunit 8 (55 aa).

The helical transmembrane segment at 4-24 (LNPHPWFSIFITSWLILIIIL) threads the bilayer.

It belongs to the ATPase protein 8 family. Component of the ATP synthase complex composed at least of ATP5F1A/subunit alpha, ATP5F1B/subunit beta, ATP5MC1/subunit c (homooctomer), MT-ATP6/subunit a, MT-ATP8/subunit 8, ATP5ME/subunit e, ATP5MF/subunit f, ATP5MG/subunit g, ATP5MK/subunit k, ATP5MJ/subunit j, ATP5F1C/subunit gamma, ATP5F1D/subunit delta, ATP5F1E/subunit epsilon, ATP5PF/subunit F6, ATP5PB/subunit b, ATP5PD/subunit d, ATP5PO/subunit OSCP. ATP synthase complex consists of a soluble F(1) head domain (subunits alpha(3) and beta(3)) - the catalytic core - and a membrane F(0) domain - the membrane proton channel (subunits c, a, 8, e, f, g, k and j). These two domains are linked by a central stalk (subunits gamma, delta, and epsilon) rotating inside the F1 region and a stationary peripheral stalk (subunits F6, b, d, and OSCP).

It is found in the mitochondrion membrane. In terms of biological role, subunit 8, of the mitochondrial membrane ATP synthase complex (F(1)F(0) ATP synthase or Complex V) that produces ATP from ADP in the presence of a proton gradient across the membrane which is generated by electron transport complexes of the respiratory chain. ATP synthase complex consist of a soluble F(1) head domain - the catalytic core - and a membrane F(1) domain - the membrane proton channel. These two domains are linked by a central stalk rotating inside the F(1) region and a stationary peripheral stalk. During catalysis, ATP synthesis in the catalytic domain of F(1) is coupled via a rotary mechanism of the central stalk subunits to proton translocation. In vivo, can only synthesize ATP although its ATP hydrolase activity can be activated artificially in vitro. Part of the complex F(0) domain. This is ATP synthase F(0) complex subunit 8 from Pelomedusa subrufa (African side-necked turtle).